A 369-amino-acid polypeptide reads, in one-letter code: Phosphoribosyl pyrophosphate synthase-associated protein 2 (369 aa).

Met-1 is modified (N-acetylmethionine). Residues Ser-219, Ser-227, and Ser-233 each carry the phosphoserine modification.

This sequence belongs to the ribose-phosphate pyrophosphokinase family. As to quaternary structure, binds to PRPS1 and PRPS2.

Its function is as follows. Seems to play a negative regulatory role in 5-phosphoribose 1-diphosphate synthesis. This is Phosphoribosyl pyrophosphate synthase-associated protein 2 (PRPSAP2) from Bos taurus (Bovine).